Here is a 778-residue protein sequence, read N- to C-terminus: MSLGTTDIASETGDDSLSAITFESDIESKTKRKSFHKPPSTSPKSPYYSKPRKVTSWRSLKTAGSMPLSSRMSLTPQKLWLGSSKQGSVAQPPSPTLTSEHAWTHPPSCTPDYLTEAVRAKRADLRRSGSHGHVSGTSVYREKEDMYDEIIELKKSLHMQKSDVDLMRTKLRRLEEENSRKDRQIEQLLDPSRGPDFVRTLAEKKPDTGWVITGLKQRIFRLEQQCKEKDNTINKLQTDMKTTNLEEMRIAMETYYEEIHRLQTLLASSEATGKKPMVEKKLGVKRQKKMSSALLNLTRSVQELTEENQSLKEDLDRMLSNSPTISKIKGYGDWSKPRLLRRIAELEKKVSSSESPKQSTSELVNPNPLVRSPSNISVQKQPKGDQSPEDLPKVAPCEEQEHLQGTVKSLREELGALQEQLLEKDLEMKQLLQSKIDLEKELETAREGEKGRQEQEQALREEVEALTKKCQELEEAKREEKNSFVAVTHEAHPELHAPSPCSRHSEPDSDNSAGEEGSSQPPAPCSEERREAAIRTLQAQWKAHRRKKREAALDEAATVLQAAFRGHLARSKLVRSKVPDSRSPSLPGLLSPLNQSSPAPRVLSPISPAEENPTQEEAVIVIQSILRGYLAQARFIASCCREIAASSQRETVSLTPSGSASPPSLRASPGVIRKELCASEELRETSASEPAPSVPYSAQGGHGDCPSSSSLEAVPSMKDAMCEERSSSPRSAGPSLAEPSPPELQPLSPPPVEDICSDDSDDIIFSPFLPRKKSPSPF.

Disordered stretches follow at residues 1-71 (MSLG…LSSR) and 83-108 (SSKQ…HPPS). Residues 37 to 49 (KPPSTSPKSPYYS) are compositionally biased toward low complexity. A compositionally biased stretch (polar residues) spans 83-101 (SSKQGSVAQPPSPTLTSEH). A coiled-coil region spans residues 157-323 (LHMQKSDVDL…DLDRMLSNSP (167 aa)). Phosphoserine is present on serine 322. Disordered stretches follow at residues 348–392 (KKVS…EDLP), 443–462 (ETAR…LREE), 474–529 (EEAK…SEER), and 573–612 (LVRS…AEEN). Over residues 352–362 (SSESPKQSTSE) the composition is skewed to low complexity. Positions 398-486 (EEQEHLQGTV…KREEKNSFVA (89 aa)) form a coiled coil. IQ domains are found at residues 553–582 (LDEA…PDSR) and 615–644 (QEEA…REIA). Low complexity predominate over residues 581–598 (SRSPSLPGLLSPLNQSSP). The span at 651 to 662 (TVSLTPSGSASP) shows a compositional bias: polar residues. The disordered stretch occupies residues 651–778 (TVSLTPSGSA…LPRKKSPSPF (128 aa)). Phosphoserine is present on serine 661. Residues 672-686 (IRKELCASEELRETS) are compositionally biased toward basic and acidic residues. Residues 739-752 (PSPPELQPLSPPPV) show a composition bias toward pro residues.

As to quaternary structure, component of the EvC complex composed of EFCAB7, IQCE, EVC2 and EVC; built from two subcomplexes, EVC2:EVC and EFCAB7:IQCE. Interacts (via N-terminus) with EFCAB7 (via EF-hands 1 and 2); this interaction anchors the EVC-EVC2 complex in a signaling microdomain at the base of cilia and stimulates the Hedgehog (Hh) pathway. Interacts with EVC2 (via N-terminal end). Interacts with EVC.

The protein localises to the cell projection. Its subcellular location is the cilium membrane. Its function is as follows. Component of the EvC complex that positively regulates ciliary Hedgehog (Hh) signaling. Required for proper limb morphogenesis. This chain is IQ domain-containing protein E (Iqce), found in Mus musculus (Mouse).